A 336-amino-acid chain; its full sequence is Holliday junction branch migration complex subunit RuvB (336 aa).

The segment at 1 to 182 (MAKRMITTEL…FGVVHRLEFY (182 aa)) is large ATPase domain (RuvB-L). ATP contacts are provided by residues Leu21, Arg22, Gly63, Lys66, Thr67, Thr68, 129–131 (EDY), Arg172, Tyr182, and Arg219. Mg(2+) is bound at residue Thr67. A small ATPAse domain (RuvB-S) region spans residues 183-253 (TTEELKEIIT…VARFALDILE (71 aa)). The head domain (RuvB-H) stretch occupies residues 256–336 (KLGLDHIDRQ…GLPYENKELS (81 aa)). Residues Arg311 and Arg316 each coordinate DNA.

The protein belongs to the RuvB family. As to quaternary structure, homohexamer. Forms an RuvA(8)-RuvB(12)-Holliday junction (HJ) complex. HJ DNA is sandwiched between 2 RuvA tetramers; dsDNA enters through RuvA and exits via RuvB. An RuvB hexamer assembles on each DNA strand where it exits the tetramer. Each RuvB hexamer is contacted by two RuvA subunits (via domain III) on 2 adjacent RuvB subunits; this complex drives branch migration. In the full resolvosome a probable DNA-RuvA(4)-RuvB(12)-RuvC(2) complex forms which resolves the HJ.

The protein localises to the cytoplasm. The enzyme catalyses ATP + H2O = ADP + phosphate + H(+). In terms of biological role, the RuvA-RuvB-RuvC complex processes Holliday junction (HJ) DNA during genetic recombination and DNA repair, while the RuvA-RuvB complex plays an important role in the rescue of blocked DNA replication forks via replication fork reversal (RFR). RuvA specifically binds to HJ cruciform DNA, conferring on it an open structure. The RuvB hexamer acts as an ATP-dependent pump, pulling dsDNA into and through the RuvAB complex. RuvB forms 2 homohexamers on either side of HJ DNA bound by 1 or 2 RuvA tetramers; 4 subunits per hexamer contact DNA at a time. Coordinated motions by a converter formed by DNA-disengaged RuvB subunits stimulates ATP hydrolysis and nucleotide exchange. Immobilization of the converter enables RuvB to convert the ATP-contained energy into a lever motion, pulling 2 nucleotides of DNA out of the RuvA tetramer per ATP hydrolyzed, thus driving DNA branch migration. The RuvB motors rotate together with the DNA substrate, which together with the progressing nucleotide cycle form the mechanistic basis for DNA recombination by continuous HJ branch migration. Branch migration allows RuvC to scan DNA until it finds its consensus sequence, where it cleaves and resolves cruciform DNA. In Lachnoclostridium phytofermentans (strain ATCC 700394 / DSM 18823 / ISDg) (Clostridium phytofermentans), this protein is Holliday junction branch migration complex subunit RuvB.